The chain runs to 343 residues: N-acetylornithine carbamoyltransferase (343 aa).

Residues 49 to 52, Trp77, and Arg112 each bind carbamoyl phosphate; that span reads SMRT. Glu144 provides a ligand contact to N(2)-acetyl-L-ornithine. Residue 148–151 participates in carbamoyl phosphate binding; sequence HPCQ. N(2)-acetyl-L-ornithine contacts are provided by Lys252 and Leu295. 294–295 is a binding site for carbamoyl phosphate; sequence CL. N6-carboxylysine is present on Lys302. Residue Arg322 participates in carbamoyl phosphate binding.

It belongs to the aspartate/ornithine carbamoyltransferase superfamily. AOTCase family. As to quaternary structure, homotrimer.

It is found in the cytoplasm. It carries out the reaction N(2)-acetyl-L-ornithine + carbamoyl phosphate = N(2)-acetyl-L-citrulline + phosphate + H(+). It functions in the pathway amino-acid biosynthesis; L-arginine biosynthesis. With respect to regulation, carboxylation at Lys-302 increases the catalytic activity of the enzyme. Catalyzes the transfer of the carbamoyl group from carbamoyl phosphate to the delta-amino group of N(2)-acetyl-L-ornithine to produce N(2)-acetyl-L-citrulline. This is a step in an alternative arginine biosynthesis pathway. The enzyme has no activity with ornithine. This is N-acetylornithine carbamoyltransferase from Xanthomonas axonopodis pv. citri (strain 306).